We begin with the raw amino-acid sequence, 194 residues long: Ribonuclease VapC1 (194 aa).

The PINc domain occupies 34–134; sequence YVIDTSAIIS…TDDYSIQNVA (101 aa). 2 residues coordinate Mg(2+): aspartate 37 and aspartate 150.

Belongs to the PINc/VapC protein family. Mg(2+) is required as a cofactor.

Functionally, toxic component of a type II toxin-antitoxin (TA) system. An RNase. The protein is Ribonuclease VapC1 of Thermoplasma acidophilum (strain ATCC 25905 / DSM 1728 / JCM 9062 / NBRC 15155 / AMRC-C165).